A 455-amino-acid chain; its full sequence is Chromosomal replication initiator protein DnaA (455 aa).

Positions 1–73 (METSLETLWS…RDVVHEILGH (73 aa)) are domain I, interacts with DnaA modulators. Residues 73–116 (HPVEIQIEIAQGDSNATISAPEVASPPPTASPVENTNTSQRQQA) are domain II. The disordered stretch occupies residues 92–116 (APEVASPPPTASPVENTNTSQRQQA). A compositionally biased stretch (polar residues) spans 104–116 (PVENTNTSQRQQA). The segment at 117 to 333 (SLNPKYVFSR…GALIRAVAYI (217 aa)) is domain III, AAA+ region. Positions 161, 163, 164, and 165 each coordinate ATP. The tract at residues 334 to 455 (SISGLPMNVE…GDRIKLANQP (122 aa)) is domain IV, binds dsDNA.

Belongs to the DnaA family. As to quaternary structure, oligomerizes as a right-handed, spiral filament on DNA at oriC.

The protein resides in the cytoplasm. Its function is as follows. Plays an essential role in the initiation and regulation of chromosomal replication. ATP-DnaA binds to the origin of replication (oriC) to initiate formation of the DNA replication initiation complex once per cell cycle. Binds the DnaA box (a 9 base pair repeat at the origin) and separates the double-stranded (ds)DNA. Forms a right-handed helical filament on oriC DNA; dsDNA binds to the exterior of the filament while single-stranded (ss)DNA is stabiized in the filament's interior. The ATP-DnaA-oriC complex binds and stabilizes one strand of the AT-rich DNA unwinding element (DUE), permitting loading of DNA polymerase. After initiation quickly degrades to an ADP-DnaA complex that is not apt for DNA replication. Binds acidic phospholipids. The sequence is that of Chromosomal replication initiator protein DnaA from Acaryochloris marina (strain MBIC 11017).